A 270-amino-acid polypeptide reads, in one-letter code: UPF0354 protein BCAH820_4810 (270 aa).

It belongs to the UPF0354 family.

This is UPF0354 protein BCAH820_4810 from Bacillus cereus (strain AH820).